Here is a 390-residue protein sequence, read N- to C-terminus: GTPase Obg (390 aa).

The 159-residue stretch at 1–159 folds into the Obg domain; that stretch reads MKFVDEATIL…RDLQLELMLL (159 aa). Residues 127–146 form a disordered region; the sequence is NTRFKSSVNRTPRQKTMGTP. Positions 129-143 are enriched in polar residues; sequence RFKSSVNRTPRQKTM. Positions 160–333 constitute an OBG-type G domain; that stretch reads ADVGMLGMPN…LCWDVMHFII (174 aa). Residues 166–173, 191–195, 213–216, 283–286, and 314–316 contribute to the GTP site; these read GMPNAGKS, FTTLV, DIPG, NKID, and SAA. Residues Ser173 and Thr193 each contribute to the Mg(2+) site. The segment covering 364–384 has biased composition (acidic residues); it reads MEAEAEEEWDDDWDEDDDEGV. Positions 364–390 are disordered; the sequence is MEAEAEEEWDDDWDEDDDEGVEIVYQR.

It belongs to the TRAFAC class OBG-HflX-like GTPase superfamily. OBG GTPase family. In terms of assembly, monomer. Mg(2+) is required as a cofactor.

The protein resides in the cytoplasm. An essential GTPase which binds GTP, GDP and possibly (p)ppGpp with moderate affinity, with high nucleotide exchange rates and a fairly low GTP hydrolysis rate. Plays a role in control of the cell cycle, stress response, ribosome biogenesis and in those bacteria that undergo differentiation, in morphogenesis control. The polypeptide is GTPase Obg (Cronobacter sakazakii (strain ATCC BAA-894) (Enterobacter sakazakii)).